A 429-amino-acid polypeptide reads, in one-letter code: Protein AST1 (429 aa).

Interacts with PMA1.

It localises to the cell membrane. The protein localises to the membrane raft. Its subcellular location is the golgi apparatus membrane. The protein resides in the late endosome membrane. Functionally, lipid raft-associated protein involved in the targeting of PMA1 from Golgi to the plasma membrane. May induce clustering of PMA1, which facilitates partition of PMA1 into lipid rafts after leaving the ER and its transport to the cell surface. This chain is Protein AST1, found in Saccharomyces cerevisiae (strain ATCC 204508 / S288c) (Baker's yeast).